A 178-amino-acid polypeptide reads, in one-letter code: Large ribosomal subunit protein uL10 (178 aa).

It belongs to the universal ribosomal protein uL10 family. As to quaternary structure, part of the ribosomal stalk of the 50S ribosomal subunit. The N-terminus interacts with L11 and the large rRNA to form the base of the stalk. The C-terminus forms an elongated spine to which L12 dimers bind in a sequential fashion forming a multimeric L10(L12)X complex.

Forms part of the ribosomal stalk, playing a central role in the interaction of the ribosome with GTP-bound translation factors. The chain is Large ribosomal subunit protein uL10 from Salinibacter ruber (strain DSM 13855 / M31).